A 339-amino-acid chain; its full sequence is DNA-directed RNA polymerase subunit alpha (339 aa).

An alpha N-terminal domain (alpha-NTD) region spans residues 1–233 (MVREEVAGST…DLFLPFLHAE (233 aa)). The tract at residues 266-339 (GIPLNCIFID…IDLLKNKLSF (74 aa)) is alpha C-terminal domain (alpha-CTD).

Belongs to the RNA polymerase alpha chain family. In terms of assembly, in plastids the minimal PEP RNA polymerase catalytic core is composed of four subunits: alpha, beta, beta', and beta''. When a (nuclear-encoded) sigma factor is associated with the core the holoenzyme is formed, which can initiate transcription.

The protein localises to the plastid. The protein resides in the chloroplast. It catalyses the reaction RNA(n) + a ribonucleoside 5'-triphosphate = RNA(n+1) + diphosphate. In terms of biological role, DNA-dependent RNA polymerase catalyzes the transcription of DNA into RNA using the four ribonucleoside triphosphates as substrates. In Elymus canadensis (Canada wild rye), this protein is DNA-directed RNA polymerase subunit alpha.